Consider the following 311-residue polypeptide: 3-dehydro-scyllo-inosose hydrolase (311 aa).

Zn(2+) is bound by residues Glu35, His37, Asp46, His117, and Glu173.

It belongs to the creatininase superfamily. In terms of assembly, homotrimer. It depends on Zn(2+) as a cofactor.

The enzyme catalyses 3-dehydro-scyllo-inosose + H2O = 5-dehydro-L-gluconate + H(+). It participates in polyol metabolism; myo-inositol metabolism. Its function is as follows. Catalyzes the ring-opening hydrolysis of 3-dehydro-scyllo-inosose (diketo-inositol) to 5-dehydro-L-gluconate, and thus probably functions in a myo-inositol degradation pathway together with IolG, IolM and IolO. The chain is 3-dehydro-scyllo-inosose hydrolase from Thermotoga maritima (strain ATCC 43589 / DSM 3109 / JCM 10099 / NBRC 100826 / MSB8).